Reading from the N-terminus, the 1342-residue chain is DNA-directed RNA polymerase subunit beta (1342 aa).

This sequence belongs to the RNA polymerase beta chain family. In terms of assembly, the RNAP catalytic core consists of 2 alpha, 1 beta, 1 beta' and 1 omega subunit. When a sigma factor is associated with the core the holoenzyme is formed, which can initiate transcription.

It catalyses the reaction RNA(n) + a ribonucleoside 5'-triphosphate = RNA(n+1) + diphosphate. Functionally, DNA-dependent RNA polymerase catalyzes the transcription of DNA into RNA using the four ribonucleoside triphosphates as substrates. The protein is DNA-directed RNA polymerase subunit beta of Blochmanniella floridana.